Reading from the N-terminus, the 689-residue chain is Glycine--tRNA ligase beta subunit (689 aa).

The protein belongs to the class-II aminoacyl-tRNA synthetase family. Tetramer of two alpha and two beta subunits.

The protein localises to the cytoplasm. It carries out the reaction tRNA(Gly) + glycine + ATP = glycyl-tRNA(Gly) + AMP + diphosphate. The protein is Glycine--tRNA ligase beta subunit of Serratia proteamaculans (strain 568).